Reading from the N-terminus, the 397-residue chain is Putative odorant receptor 83c (397 aa).

Over 1–39 the chain is Cytoplasmic; that stretch reads MSTSESPSSRFRELSKYINSLTNLLGVDFLSPKLKFNYR. The helical transmembrane segment at 40–60 threads the bilayer; sequence TWTTIFAIANYTGFTVFTILN. Topologically, residues 61-70 are extracellular; it reads NGGDWRVGLK. The chain crosses the membrane as a helical span at residues 71 to 90; the sequence is ASLMTGGLFHGLGKFLTCLL. Residues 91–136 lie on the Cytoplasmic side of the membrane; the sequence is KHQDMRRLVLYSQSIYDEYETRGDSYHRTLNSNIDRLLGIMKIIRN. The helical transmembrane segment at 137–157 threads the bilayer; the sequence is GYVFAFCLMELLPLAMLMYDG. At 158–186 the chain is on the extracellular side; sequence TRVTAMQYLIPGLPLENNYCYVVTYMIQT. The chain crosses the membrane as a helical span at residues 187–207; it reads VTMLVQGVGFYSGDLFVFLGL. Topologically, residues 208–282 are cytoplasmic; sequence TQILTFADML…ALYYELIATQ (75 aa). Residues 283–299 form a helical membrane-spanning segment; the sequence is VLSMALAMMLSFCINLS. Residues 300 to 305 lie on the Extracellular side of the membrane; it reads SFHMPS. The helical transmembrane segment at 306 to 326 threads the bilayer; that stretch reads AIFFVVSAYSMSIYCILGTIL. The Cytoplasmic segment spans residues 327 to 365; sequence EFAYDQVYESICNVTWYELSGEQRKLFGFLLRESQYPHN. Residues 366 to 386 form a helical membrane-spanning segment; that stretch reads IQILGVMSLSVRTALQIVKLI. The Extracellular segment spans residues 387 to 397; it reads YSVSMMMMNRA.

It belongs to the insect chemoreceptor superfamily. Heteromeric odorant receptor channel (TC 1.A.69) family. Or67d subfamily. Interacts with Orco. Complexes exist early in the endomembrane system in olfactory sensory neurons (OSNs), coupling these complexes to the conserved ciliary trafficking pathway. In terms of tissue distribution, expressed in olfactory sensory neurons in the antenna.

Its subcellular location is the cell membrane. Functionally, odorant receptor which mediates acceptance or avoidance behavior, depending on its substrates. The odorant receptor repertoire encodes a large collection of odor stimuli that vary widely in identity, intensity, and duration. May form a complex with Orco to form odorant-sensing units, providing sensitive and prolonged odorant signaling and calcium permeability. The polypeptide is Putative odorant receptor 83c (Or83c) (Drosophila melanogaster (Fruit fly)).